The chain runs to 261 residues: Putative hydro-lyase SAR11_0660 (261 aa).

This sequence belongs to the D-glutamate cyclase family.

The chain is Putative hydro-lyase SAR11_0660 from Pelagibacter ubique (strain HTCC1062).